A 436-amino-acid chain; its full sequence is KICSTOR complex protein kaptin (436 aa).

The residue at position 1 (M1) is an N-acetylmethionine.

In terms of assembly, part of the KICSTOR complex composed of KPTN, ITFG2, KICS2 and SZT2. SZT2 probably serves as a link between the other three proteins in the KICSTOR complex and mediates the direct interaction with the GATOR1 complex. May associate with F-actin filaments.

The protein resides in the lysosome membrane. It is found in the cell projection. The protein localises to the lamellipodium. Its subcellular location is the stereocilium. Its function is as follows. As part of the KICSTOR complex functions in the amino acid-sensing branch of the TORC1 signaling pathway. Recruits, in an amino acid-independent manner, the GATOR1 complex to the lysosomal membranes and allows its interaction with GATOR2 and the RAG GTPases. Functions upstream of the RAG GTPases and is required to negatively regulate mTORC1 signaling in absence of amino acids. In absence of the KICSTOR complex mTORC1 is constitutively localized to the lysosome and activated. The KICSTOR complex is also probably involved in the regulation of mTORC1 by glucose. In Homo sapiens (Human), this protein is KICSTOR complex protein kaptin.